Reading from the N-terminus, the 179-residue chain is Large ribosomal subunit protein bL27c (179 aa).

A chloroplast-targeting transit peptide spans 1 to 51 (MAVSFSLVGAFKGLSLASSSSFLKGDFGAAFPVAPKFSVSFPLKSPLTIES).

Belongs to the bacterial ribosomal protein bL27 family. In terms of assembly, part of the 50S ribosomal subunit.

Its subcellular location is the plastid. It localises to the chloroplast. The chain is Large ribosomal subunit protein bL27c (RPL27) from Nicotiana tabacum (Common tobacco).